A 354-amino-acid chain; its full sequence is Uroporphyrinogen decarboxylase (354 aa).

Substrate-binding positions include 27–31 (RQAGR), Asp-77, Tyr-154, Thr-209, and His-327.

It belongs to the uroporphyrinogen decarboxylase family. In terms of assembly, homodimer.

It is found in the cytoplasm. It carries out the reaction uroporphyrinogen III + 4 H(+) = coproporphyrinogen III + 4 CO2. It participates in porphyrin-containing compound metabolism; protoporphyrin-IX biosynthesis; coproporphyrinogen-III from 5-aminolevulinate: step 4/4. Its function is as follows. Catalyzes the decarboxylation of four acetate groups of uroporphyrinogen-III to yield coproporphyrinogen-III. The sequence is that of Uroporphyrinogen decarboxylase from Hydrogenovibrio crunogenus (strain DSM 25203 / XCL-2) (Thiomicrospira crunogena).